Here is a 262-residue protein sequence, read N- to C-terminus: Indole-3-glycerol phosphate synthase (262 aa).

It belongs to the TrpC family.

The enzyme catalyses 1-(2-carboxyphenylamino)-1-deoxy-D-ribulose 5-phosphate + H(+) = (1S,2R)-1-C-(indol-3-yl)glycerol 3-phosphate + CO2 + H2O. The protein operates within amino-acid biosynthesis; L-tryptophan biosynthesis; L-tryptophan from chorismate: step 4/5. The sequence is that of Indole-3-glycerol phosphate synthase from Staphylococcus epidermidis (strain ATCC 35984 / DSM 28319 / BCRC 17069 / CCUG 31568 / BM 3577 / RP62A).